Consider the following 226-residue polypeptide: MTTPQQPHGPLRSFGRLKSRPVKPRQQALLDTLLPEIAVPTGPFQPLDLMPEAKAVWLEIGFGGGEHMASQAGRNPETLVIGAEPFVNGVASAVRHVEEQALKNVRIHEGDARDVVDWLPDACLDRVFIMFPDPWHKARHNKRRLIQPEFVAKLARVMKPGAALRFATDWADYAEWTTERVLADPSFRFADEAADRNAIPADHVTTRYEEKKLGDCAPVFLDFTRG.

The disordered stretch occupies residues M1–V22. S-adenosyl-L-methionine-binding residues include E59, E84, D111, and D133. The active site involves D133. K137 contributes to the substrate binding site. Positions R139–R144 are interaction with RNA. Substrate is bound by residues D169 and T206–E209.

The protein belongs to the class I-like SAM-binding methyltransferase superfamily. TrmB family.

The enzyme catalyses guanosine(46) in tRNA + S-adenosyl-L-methionine = N(7)-methylguanosine(46) in tRNA + S-adenosyl-L-homocysteine. It functions in the pathway tRNA modification; N(7)-methylguanine-tRNA biosynthesis. Functionally, catalyzes the formation of N(7)-methylguanine at position 46 (m7G46) in tRNA. In Caulobacter vibrioides (strain ATCC 19089 / CIP 103742 / CB 15) (Caulobacter crescentus), this protein is tRNA (guanine-N(7)-)-methyltransferase.